The following is a 380-amino-acid chain: 1-deoxy-D-xylulose 5-phosphate reductoisomerase (380 aa).

8 residues coordinate NADPH: Ser10, Gly11, Ser12, Ile13, Gly36, Lys37, Asn38, and Asn120. Lys121 serves as a coordination point for 1-deoxy-D-xylulose 5-phosphate. Residue Glu122 participates in NADPH binding. Asp146 is a Mn(2+) binding site. 1-deoxy-D-xylulose 5-phosphate is bound by residues Ser147, Glu148, Ser172, and His195. Glu148 provides a ligand contact to Mn(2+). Position 201 (Gly201) interacts with NADPH. 1-deoxy-D-xylulose 5-phosphate contacts are provided by Ser208, Asn213, Lys214, and Glu217. Position 217 (Glu217) interacts with Mn(2+).

The protein belongs to the DXR family. It depends on Mg(2+) as a cofactor. Mn(2+) serves as cofactor.

It carries out the reaction 2-C-methyl-D-erythritol 4-phosphate + NADP(+) = 1-deoxy-D-xylulose 5-phosphate + NADPH + H(+). The protein operates within isoprenoid biosynthesis; isopentenyl diphosphate biosynthesis via DXP pathway; isopentenyl diphosphate from 1-deoxy-D-xylulose 5-phosphate: step 1/6. Catalyzes the NADPH-dependent rearrangement and reduction of 1-deoxy-D-xylulose-5-phosphate (DXP) to 2-C-methyl-D-erythritol 4-phosphate (MEP). The sequence is that of 1-deoxy-D-xylulose 5-phosphate reductoisomerase from Bacillus cereus (strain ATCC 10987 / NRS 248).